The following is a 249-amino-acid chain: Adenosylcobinamide-GDP ribazoletransferase (249 aa).

A run of 6 helical transmembrane segments spans residues 32 to 52, 53 to 73, 107 to 127, 136 to 156, 190 to 210, and 224 to 244; these read MVAF…TWFG, ATWL…WGAI, IGTM…LFVL, ALIV…FWFP, LLWW…IIIA, and TYGA…AALV.

Belongs to the CobS family. Requires Mg(2+) as cofactor.

It is found in the cell membrane. The catalysed reaction is alpha-ribazole + adenosylcob(III)inamide-GDP = adenosylcob(III)alamin + GMP + H(+). The enzyme catalyses alpha-ribazole 5'-phosphate + adenosylcob(III)inamide-GDP = adenosylcob(III)alamin 5'-phosphate + GMP + H(+). Its pathway is cofactor biosynthesis; adenosylcobalamin biosynthesis; adenosylcobalamin from cob(II)yrinate a,c-diamide: step 7/7. Functionally, joins adenosylcobinamide-GDP and alpha-ribazole to generate adenosylcobalamin (Ado-cobalamin). Also synthesizes adenosylcobalamin 5'-phosphate from adenosylcobinamide-GDP and alpha-ribazole 5'-phosphate. The protein is Adenosylcobinamide-GDP ribazoletransferase of Herpetosiphon aurantiacus (strain ATCC 23779 / DSM 785 / 114-95).